Consider the following 755-residue polypeptide: 1,4-alpha-glucan branching enzyme GlgB (755 aa).

Asp-431 serves as the catalytic Nucleophile. Glu-484 serves as the catalytic Proton donor.

Belongs to the glycosyl hydrolase 13 family. GlgB subfamily. Monomer.

The enzyme catalyses Transfers a segment of a (1-&gt;4)-alpha-D-glucan chain to a primary hydroxy group in a similar glucan chain.. It functions in the pathway glycan biosynthesis; glycogen biosynthesis. In terms of biological role, catalyzes the formation of the alpha-1,6-glucosidic linkages in glycogen by scission of a 1,4-alpha-linked oligosaccharide from growing alpha-1,4-glucan chains and the subsequent attachment of the oligosaccharide to the alpha-1,6 position. This chain is 1,4-alpha-glucan branching enzyme GlgB, found in Prochlorococcus marinus (strain NATL2A).